Here is a 391-residue protein sequence, read N- to C-terminus: UPF0328 protein ECU06_1650 (391 aa).

The protein belongs to the UPF0328 family.

The chain is UPF0328 protein ECU06_1650 from Encephalitozoon cuniculi (strain GB-M1) (Microsporidian parasite).